An 812-amino-acid polypeptide reads, in one-letter code: Leucine-rich repeat-containing protein 41 (812 aa).

Residues 45-54 are interaction with Elongin BC complex; sequence ALFELCGRAV. A phosphoserine mark is found at serine 155, serine 276, and serine 326. Residues 267–408 are disordered; sequence GEASRGRAPS…GARTRQGPGA (142 aa). A Phosphothreonine modification is found at threonine 327. Positions 354–381 are enriched in low complexity; the sequence is TKRSPSAPAATSSASSSTSSYKRAPASS. Residues serine 357 and serine 373 each carry the phosphoserine modification. The span at 387–401 shows a compositional bias: basic residues; it reads PLKRFKRAAGKKGAR. 7 LRR repeats span residues 487–507, 518–530, 531–555, 613–635, 636–659, 701–728, and 731–752; these read WVSLESLTLSYNGLGSNIFRL, AGCRLRALHLSDL, FSPLPILELTRAIVRALPLLRVLSI, SGSLQQLSLDSATFASPQDFGLV, LQTLKEYNLALKRLSFHDMNLADC, NSTLKGLRLPGNRLGNAGLLALADVFSE, and SSSLCQLDISSNCIKPDGLLEF.

In terms of assembly, part of an E3 ubiquitin-protein ligase complex with Elongin BC (ELOB and ELOC), RBX1 and CUL5. Component of a probable ECS(LRRC41) complex which contains CUL5, RNF7/RBX2, Elongin BC and LRRC41. Interacts with CUL5, RNF7, ELOB and ELOC.

It functions in the pathway protein modification; protein ubiquitination. Functionally, probable substrate recognition component of an ECS (Elongin BC-CUL2/5-SOCS-box protein) E3 ubiquitin ligase complex which mediates the ubiquitination and subsequent proteasomal degradation of target proteins. The sequence is that of Leucine-rich repeat-containing protein 41 (LRRC41) from Homo sapiens (Human).